Reading from the N-terminus, the 461-residue chain is NADH-ubiquinone oxidoreductase chain 4 (461 aa).

The next 13 membrane-spanning stretches (helical) occupy residues Pro20–Leu42, Pro61–Ser81, Gln93–Ala113, Thr114–Ile134, Gly147–Met167, Trp197–Leu217, Pro225–Met245, Leu258–Leu278, Ser285–Thr304, Gly309–Ala331, Val351–Pro371, Thr393–Leu413, and Leu436–Trp456.

It belongs to the complex I subunit 4 family.

The protein resides in the mitochondrion membrane. It carries out the reaction a ubiquinone + NADH + 5 H(+)(in) = a ubiquinol + NAD(+) + 4 H(+)(out). Core subunit of the mitochondrial membrane respiratory chain NADH dehydrogenase (Complex I) that is believed to belong to the minimal assembly required for catalysis. Complex I functions in the transfer of electrons from NADH to the respiratory chain. The immediate electron acceptor for the enzyme is believed to be ubiquinone. The sequence is that of NADH-ubiquinone oxidoreductase chain 4 (MT-ND4) from Latimeria chalumnae (Coelacanth).